Consider the following 270-residue polypeptide: NAD kinase (270 aa).

Residue Asp-62 is the Proton acceptor of the active site. NAD(+) is bound by residues Asp-62–Gly-63, Arg-67, Asn-129–Asp-130, Lys-140, Asp-159, Ile-167, Thr-170–Ser-175, Ala-194, and Gln-227.

Belongs to the NAD kinase family. A divalent metal cation serves as cofactor.

It is found in the cytoplasm. It catalyses the reaction NAD(+) + ATP = ADP + NADP(+) + H(+). Its function is as follows. Involved in the regulation of the intracellular balance of NAD and NADP, and is a key enzyme in the biosynthesis of NADP. Catalyzes specifically the phosphorylation on 2'-hydroxyl of the adenosine moiety of NAD to yield NADP. This is NAD kinase from Picrophilus torridus (strain ATCC 700027 / DSM 9790 / JCM 10055 / NBRC 100828 / KAW 2/3).